Here is a 254-residue protein sequence, read N- to C-terminus: 3-deoxy-manno-octulosonate cytidylyltransferase (254 aa).

Belongs to the KdsB family.

It localises to the cytoplasm. The enzyme catalyses 3-deoxy-alpha-D-manno-oct-2-ulosonate + CTP = CMP-3-deoxy-beta-D-manno-octulosonate + diphosphate. It functions in the pathway nucleotide-sugar biosynthesis; CMP-3-deoxy-D-manno-octulosonate biosynthesis; CMP-3-deoxy-D-manno-octulosonate from 3-deoxy-D-manno-octulosonate and CTP: step 1/1. Its pathway is bacterial outer membrane biogenesis; lipopolysaccharide biosynthesis. In terms of biological role, activates KDO (a required 8-carbon sugar) for incorporation into bacterial lipopolysaccharide in Gram-negative bacteria. This is 3-deoxy-manno-octulosonate cytidylyltransferase from Pseudomonas fluorescens (strain ATCC BAA-477 / NRRL B-23932 / Pf-5).